An 86-amino-acid polypeptide reads, in one-letter code: Large ribosomal subunit protein bL27 (86 aa).

Residues 1–26 (MATKKAGGSSRNGRDSAGRRLGVKKS) form a disordered region.

It belongs to the bacterial ribosomal protein bL27 family.

The sequence is that of Large ribosomal subunit protein bL27 from Rickettsia prowazekii (strain Madrid E).